We begin with the raw amino-acid sequence, 214 residues long: Thymidylate kinase (214 aa).

10–17 (GPDGAGKT) lines the ATP pocket.

The protein belongs to the thymidylate kinase family.

The catalysed reaction is dTMP + ATP = dTDP + ADP. Phosphorylation of dTMP to form dTDP in both de novo and salvage pathways of dTTP synthesis. In Lacticaseibacillus casei (strain BL23) (Lactobacillus casei), this protein is Thymidylate kinase.